A 775-amino-acid chain; its full sequence is MGGNKKESYKKTSLGSKAKGPEKPSCSSARKHQSEPMSKSPIASTSAAAANVTPAKTFAHAVATGSNPGQVTAGVEKLTRKHGVRCLMSSTHGIEAYIKAAAEVVGHSAVVAASKMYGKAIIFARTLTAVHTLVQRGITVGGSYVPVEPLEGLGTRVVLSNVPPFLQDHLLYPHLQALGELKSNMSRIPLGCKESRLRHVLSFKRQVQLLLPRGQDTIEGSFGVPFEGVLYKIFYSTEEVRCFLCKNLGHTRQSCPKGQIKTTAPVPAPSASNKTSYPAGTISAGSSKGISPSLKNLKVAVTQPTSTTSKPPPSSLKTSKAAACLTIAAKEKGGKHVKASPRVTVVPITKKCTPVMGTPEGVGVPMIATSVGVGADSGLSSSDAKKKRKFKSNWLVPEEWASVVNDGAPPSKGKKGSKTSAPHVVTLSGPTVGHDQPVSDHALLPPDQVGNNEVNGLHGLEHGSVGFPTESGVQYLPQNHLEDLPLECKETPNETPAEWAVSVPEVLRFGNCNQPQFLVPQGISLQEGENIGLTPIQDPADKTAGKDGEGGVVDTEEGSQTTSTVHAKISLPLSSTDPNVIAIQKAQEVVERAEANHRASKALPVAGELISSVAPVSNTSKCVSSEVEGTPEPLQGLQKSDSDTFPATTCGEILKALVERGDYQSLSQEELMDEGNIEEEVDIGVANPSTPIIPAEELKKFLESTLGVKLEKKMHMALEKWHDLPLVINSVRQYIKVIKEAKNYGTAEYLRIMKFHKKCLSHQTLMKVKALPKTQ.

Positions 1–10 (MGGNKKESYK) are enriched in basic and acidic residues. Disordered stretches follow at residues 1–46 (MGGN…ASTS), 256–277 (PKGQIKTTAPVPAPSASNKTSY), and 535–565 (PIQDPADKTAGKDGEGGVVDTEEGSQTTSTV). Residues 35 to 46 (EPMSKSPIASTS) show a composition bias toward polar residues. Residues 539–549 (PADKTAGKDGE) show a composition bias toward basic and acidic residues.

This chain is Transposon TX1 uncharacterized 82 kDa protein, found in Xenopus laevis (African clawed frog).